A 674-amino-acid chain; its full sequence is E3 ubiquitin ligase Rnf157 (674 aa).

An RING-type zinc finger spans residues 277–316 (CVVCLSDVRDTLILPCRHLCLCNACADTLRYQASNCPICR). 2 disordered regions span residues 376-404 (LTPS…GSDI) and 433-610 (QNSS…TGRE). Residues 469–508 (TPESENLTLSSSGAIDQSSCTGTPLSPTISSPEDPLSSSL) are compositionally biased toward polar residues. A compositionally biased stretch (low complexity) spans 509–526 (AQSIMSMASSHSQQSQLS). Positions 527 to 537 (TDTVSSMSGSY) are enriched in polar residues. Positions 583–604 (EEMDAEGNVTEEEFASPEEDDG) are enriched in acidic residues.

The protein localises to the cytoplasm. The catalysed reaction is S-ubiquitinyl-[E2 ubiquitin-conjugating enzyme]-L-cysteine + [acceptor protein]-L-lysine = [E2 ubiquitin-conjugating enzyme]-L-cysteine + N(6)-ubiquitinyl-[acceptor protein]-L-lysine.. Its function is as follows. E3 ubiquitin ligase that ubiquitinates apbb1 for its degradation by the proteasome and thus prevents apoptosis and promotes survival of neurons. Has a dual role in neurons as it is also required for dendrite growth and maintenance for which its ligase activity is not critical. May act as a scaffold molecule to regulate this process. Acts as a downstream effector of the interconnected PI3K and MAPK signaling pathways and thus participates in the regulation of the cell cycle. The sequence is that of E3 ubiquitin ligase Rnf157 (rnf157) from Xenopus laevis (African clawed frog).